Reading from the N-terminus, the 384-residue chain is MADKKSPLIAVSVGEASGDLLGAHLIRAIRKRCPQARFVGIGGELMKAEGFESLYDQERLAVRGFVEVVRRLPEILRIRRGLVRDLLSLKPDVFVGIDAPDFNLGVAERLKRSGIPTVHYVSPSVWAWRRERVGKIVHQVNRVLCLFPMEPQLYLDAGGRAEFVGHPMAQLMPLEDDRETARKTLGVDAGIPVFALLPGSRVSEIDYMAPVFFQTALLLLKRYPAARFLLPAATEATKRRLAEILQRSEFAGLPLTVTDRQSETVCRAADAVLVTSGTATLEVALCKRPMVISYKISPLTYAYVKRKIKVPHVGLPNILLGKEAVPELLQHDAVPEKLAAALADWYEHPDKVAALQQDFRVLHLLLKKDTADLAARAVLEEAGC.

Belongs to the LpxB family.

The enzyme catalyses a lipid X + a UDP-2-N,3-O-bis[(3R)-3-hydroxyacyl]-alpha-D-glucosamine = a lipid A disaccharide + UDP + H(+). Its pathway is bacterial outer membrane biogenesis; LPS lipid A biosynthesis. Condensation of UDP-2,3-diacylglucosamine and 2,3-diacylglucosamine-1-phosphate to form lipid A disaccharide, a precursor of lipid A, a phosphorylated glycolipid that anchors the lipopolysaccharide to the outer membrane of the cell. The chain is Lipid-A-disaccharide synthase (lpxB) from Neisseria meningitidis serogroup A / serotype 4A (strain DSM 15465 / Z2491).